Consider the following 314-residue polypeptide: 3'-5' exoribonuclease YhaM (314 aa).

A DNA-binding region (OB) is located at residues 22-90 (SSTKGIASNG…QLKLRNIRPV (69 aa)). Residues 163–279 (HVVSMLNLAK…LHYIDNLDAK (117 aa)) form the HD domain.

It belongs to the YhaM family. It depends on Mn(2+) as a cofactor. The cofactor is Co(2+).

Its function is as follows. Shows a 3'-5' exoribonuclease activity as well as single-stranded DNA 3'-5'exonuclease activity. Plays a role in the secondary pathway of 23S rRNA 3' end maturation. In Bacillus subtilis (strain 168), this protein is 3'-5' exoribonuclease YhaM.